The following is a 124-amino-acid chain: Large ribosomal subunit protein bL12 (124 aa).

This sequence belongs to the bacterial ribosomal protein bL12 family. In terms of assembly, homodimer. Part of the ribosomal stalk of the 50S ribosomal subunit. Forms a multimeric L10(L12)X complex, where L10 forms an elongated spine to which 2 to 4 L12 dimers bind in a sequential fashion. Binds GTP-bound translation factors.

Functionally, forms part of the ribosomal stalk which helps the ribosome interact with GTP-bound translation factors. Is thus essential for accurate translation. This chain is Large ribosomal subunit protein bL12, found in Phocaeicola vulgatus (strain ATCC 8482 / DSM 1447 / JCM 5826 / CCUG 4940 / NBRC 14291 / NCTC 11154) (Bacteroides vulgatus).